The chain runs to 51 residues: UPF0181 protein HAPS_0710 (51 aa).

The protein belongs to the UPF0181 family.

This is UPF0181 protein HAPS_0710 from Glaesserella parasuis serovar 5 (strain SH0165) (Haemophilus parasuis).